A 475-amino-acid polypeptide reads, in one-letter code: Glutamyl-tRNA(Gln) amidotransferase subunit A (475 aa).

Active-site charge relay system residues include lysine 69 and serine 144. Residue serine 168 is the Acyl-ester intermediate of the active site.

Belongs to the amidase family. GatA subfamily. Heterotrimer of A, B and C subunits.

It carries out the reaction L-glutamyl-tRNA(Gln) + L-glutamine + ATP + H2O = L-glutaminyl-tRNA(Gln) + L-glutamate + ADP + phosphate + H(+). Its function is as follows. Allows the formation of correctly charged Gln-tRNA(Gln) through the transamidation of misacylated Glu-tRNA(Gln) in organisms which lack glutaminyl-tRNA synthetase. The reaction takes place in the presence of glutamine and ATP through an activated gamma-phospho-Glu-tRNA(Gln). The polypeptide is Glutamyl-tRNA(Gln) amidotransferase subunit A (Methanococcoides burtonii (strain DSM 6242 / NBRC 107633 / OCM 468 / ACE-M)).